A 510-amino-acid polypeptide reads, in one-letter code: 2,3-bisphosphoglycerate-independent phosphoglycerate mutase (510 aa).

Asp12 and Ser62 together coordinate Mn(2+). The active-site Phosphoserine intermediate is the Ser62. Substrate is bound by residues His123, 153 to 154 (RD), Arg185, Arg191, 260 to 263 (RPDR), and Lys333. Mn(2+) contacts are provided by Asp400, His404, Asp441, His442, and His460.

It belongs to the BPG-independent phosphoglycerate mutase family. As to quaternary structure, monomer. The cofactor is Mn(2+).

It carries out the reaction (2R)-2-phosphoglycerate = (2R)-3-phosphoglycerate. The protein operates within carbohydrate degradation; glycolysis; pyruvate from D-glyceraldehyde 3-phosphate: step 3/5. Its function is as follows. Catalyzes the interconversion of 2-phosphoglycerate and 3-phosphoglycerate. The chain is 2,3-bisphosphoglycerate-independent phosphoglycerate mutase from Clostridium acetobutylicum (strain ATCC 824 / DSM 792 / JCM 1419 / IAM 19013 / LMG 5710 / NBRC 13948 / NRRL B-527 / VKM B-1787 / 2291 / W).